The following is a 696-amino-acid chain: Protein OS-9 homolog (696 aa).

A signal peptide spans 1 to 15 (MLVVAFASLLGAARA). N-linked (GlcNAc...) asparagine glycosylation is found at Asn-35, Asn-46, and Asn-68. The MRH domain occupies 106-224 (NQCLVSQNGF…QVIVPDLCQL (119 aa)). A disulfide bridge connects residues Cys-108 and Cys-121. Residues Trp-116, Gln-128, Asp-178, Arg-184, Glu-206, and Tyr-212 each coordinate a mannooligosaccharide derivative. Intrachain disulfides connect Cys-177/Cys-210 and Cys-192/Cys-222. Asn-276, Asn-290, and Asn-372 each carry an N-linked (GlcNAc...) asparagine glycan. Disordered regions lie at residues 450–600 (IEAS…DNSD) and 667–696 (TLGN…DDEL). Over residues 458-467 (TKASESTPVS) the composition is skewed to polar residues. The segment covering 482-498 (RSRDKEEYFKENEKQGE) has biased composition (basic and acidic residues). 3 stretches are compositionally biased toward polar residues: residues 499–518 (ENNA…GTIS), 528–553 (NQKQ…SAND), and 585–597 (NIDN…TLND). Asn-588 carries N-linked (GlcNAc...) asparagine glycosylation. The segment covering 685–696 (ESDRNGVIDDEL) has biased composition (basic and acidic residues).

It belongs to the OS-9 family. In terms of assembly, interacts with missfolded ER lumenal proteins.

The protein localises to the endoplasmic reticulum membrane. Functionally, lectin involved in the quality control of the secretory pathway. As a member of the endoplasmic reticulum-associated degradation lumenal (ERAD-L) surveillance system, targets misfolded endoplasmic reticulum lumenal glycoproteins for degradation. The chain is Protein OS-9 homolog (YOS9) from Candida glabrata (strain ATCC 2001 / BCRC 20586 / JCM 3761 / NBRC 0622 / NRRL Y-65 / CBS 138) (Yeast).